Consider the following 229-residue polypeptide: 7-cyano-7-deazaguanine synthase (229 aa).

Residue 7–17 (LSGGLDSSTIL) coordinates ATP. The Zn(2+) site is built by cysteine 191, cysteine 199, cysteine 202, and cysteine 205.

Belongs to the QueC family. Zn(2+) serves as cofactor.

The catalysed reaction is 7-carboxy-7-deazaguanine + NH4(+) + ATP = 7-cyano-7-deazaguanine + ADP + phosphate + H2O + H(+). It functions in the pathway purine metabolism; 7-cyano-7-deazaguanine biosynthesis. Catalyzes the ATP-dependent conversion of 7-carboxy-7-deazaguanine (CDG) to 7-cyano-7-deazaguanine (preQ(0)). This chain is 7-cyano-7-deazaguanine synthase, found in Nostoc sp. (strain PCC 7120 / SAG 25.82 / UTEX 2576).